The following is a 548-amino-acid chain: MATTGTTSMPAPVFHPTVWGDYFIKFVPEPLQVSDETMAERIRHLREEVSGMFQACKNVVDKTNLVDVVQRLGIDHHFEEQIATALASIHSAGLFNSSSLHEAALRFRLLRQQGFWVPADELVKFIKNEDGSFIDGITNDPKGLLSLYNAAHLVTHDEGTTTLEDAIAFARQHLEAARRCSLKSPLAEQVGRALGIPLPRTLKREEAIAFIPEYSSQQDQQVYSPVILELAKLDFNLLQHLHQEELKEISQWWKDLSGEIGLGYVRDRIVECYFWSYTVHYERGQARARMILAKVFMLTSLLDDTYDVHATLEEARELNKAIQRWDESDVSLLPEYLKKFFVKVISNFREFEDELESHEKYRNVYNIKGFQTLSKHYLQEAEWFHHGCTPSFKDQVNVSVITGGAQVLSIGLLVGMGHEATREAFEWAIGDTDAIWACGEVSRFMDDMSAFKNGRNKMDVASSVECYIKEHNVPSEVALARINSLVEDAWKTINQAPFKYPALFPVVQRVTSLAKSMTLLFLDKRDAYTYSKDFQTTLETHFVRHIPL.

Mg(2+)-binding residues include D303 and D307. D303, D307, and R443 together coordinate substrate. The DDXXD motif motif lies at 303–307; that stretch reads DDTYD.

Belongs to the terpene synthase family. As to quaternary structure, monomer. Mg(2+) is required as a cofactor. It depends on Mn(2+) as a cofactor. As to expression, constitutively expressed in aerial tissues, but barely observed in roots.

It is found in the cytoplasm. The enzyme catalyses (2E,6E)-farnesyl diphosphate + H2O = tau-cadinol + diphosphate. The protein operates within secondary metabolite biosynthesis; terpenoid biosynthesis. Functionally, sesquiterpene synthase that catalyzes the formation of a blend of sesquiterpenes and sesquiterpenoid alcohols. Converts farnesyl diphosphate to tau-cadinol. This is Tau-cadinol synthase from Zea mays (Maize).